Consider the following 102-residue polypeptide: MAGQKIRIRLKAYDHEVIDKSARRIVETVTRTGAQVAGPVPLPTEKNVYCVIRSPHKYKDSREHFEMRTHKRLIDIIDPTPKTVDSLMRLDLPAGVDIEIKL.

It belongs to the universal ribosomal protein uS10 family. Part of the 30S ribosomal subunit.

Functionally, involved in the binding of tRNA to the ribosomes. The polypeptide is Small ribosomal subunit protein uS10 (Thermobifida fusca (strain YX)).